Here is a 448-residue protein sequence, read N- to C-terminus: Glutamyl-tRNA reductase (448 aa).

Substrate-binding positions include 49–52 (TCNR), serine 109, 114–116 (ETQ), and glutamine 120. Cysteine 50 functions as the Nucleophile in the catalytic mechanism. An NADP(+)-binding site is contributed by 189–194 (GAGEMG).

This sequence belongs to the glutamyl-tRNA reductase family. As to quaternary structure, homodimer.

The enzyme catalyses (S)-4-amino-5-oxopentanoate + tRNA(Glu) + NADP(+) = L-glutamyl-tRNA(Glu) + NADPH + H(+). It participates in porphyrin-containing compound metabolism; protoporphyrin-IX biosynthesis; 5-aminolevulinate from L-glutamyl-tRNA(Glu): step 1/2. Catalyzes the NADPH-dependent reduction of glutamyl-tRNA(Glu) to glutamate 1-semialdehyde (GSA). The chain is Glutamyl-tRNA reductase from Staphylococcus epidermidis (strain ATCC 35984 / DSM 28319 / BCRC 17069 / CCUG 31568 / BM 3577 / RP62A).